We begin with the raw amino-acid sequence, 498 residues long: Resveratrol cleavage oxygenase 1 (498 aa).

Piceatannol-binding residues include Tyr105 and Lys136. Tyr105 and Lys136 together coordinate trans-resveratrol. Residues His169, His220, and His285 each coordinate Fe cation. Glu355 is a binding site for piceatannol. A trans-resveratrol-binding site is contributed by Glu355. Residue His481 participates in Fe cation binding.

The protein belongs to the carotenoid oxygenase family. Fe(2+) serves as cofactor.

It catalyses the reaction trans-resveratrol + O2 = 3,5-dihydroxybenzaldehyde + 4-hydroxybenzaldehyde. It carries out the reaction piceatannol + O2 = 3,5-dihydroxybenzaldehyde + 3,4-dihydroxybenzaldehyde. Dioxygenase that cleaves the interphenyl C-alpha-C-beta double bond of resveratrol to yield 3,5-dihydroxybenzaldehyde and 4-hydroxybenzaldehyde. Also cleaves piceatannol, a compound that differs from resveratrol only in the occurrence of an additional hydroxyl group, which leads to the production of 3,4-dihydroxybenzaldehyde and 3,5-hydroxybenzaldehyde. The protein is Resveratrol cleavage oxygenase 1 of Aspergillus fumigatus (strain ATCC MYA-4609 / CBS 101355 / FGSC A1100 / Af293) (Neosartorya fumigata).